Consider the following 171-residue polypeptide: Adenine phosphoribosyltransferase (171 aa).

This sequence belongs to the purine/pyrimidine phosphoribosyltransferase family. Homodimer.

The protein resides in the cytoplasm. The enzyme catalyses AMP + diphosphate = 5-phospho-alpha-D-ribose 1-diphosphate + adenine. It functions in the pathway purine metabolism; AMP biosynthesis via salvage pathway; AMP from adenine: step 1/1. In terms of biological role, catalyzes a salvage reaction resulting in the formation of AMP, that is energically less costly than de novo synthesis. This Natranaerobius thermophilus (strain ATCC BAA-1301 / DSM 18059 / JW/NM-WN-LF) protein is Adenine phosphoribosyltransferase.